The chain runs to 859 residues: Probable helicase A859L (859 aa).

One can recognise a Helicase ATP-binding domain in the interval 178-349 (YQELRRSGRA…KNRELFGGVA (172 aa)). Residue 191-198 (MACRCGKT) coordinates ATP. A DEAH box motif is present at residues 298 to 301 (DECH). One can recognise a Helicase C-terminal domain in the interval 394–553 (QIIMALAYLK…RFYEHLLNPS (160 aa)).

This sequence belongs to the asfivirus helicase A859L family.

This Ornithodoros (relapsing fever ticks) protein is Probable helicase A859L.